Reading from the N-terminus, the 274-residue chain is Type II restriction enzyme XamI (274 aa).

It catalyses the reaction Endonucleolytic cleavage of DNA to give specific double-stranded fragments with terminal 5'-phosphates.. Functionally, a P subtype restriction enzyme that recognizes the double-stranded sequence 5'-GTCGAC-3' and cleaves after G-1. The protein is Type II restriction enzyme XamI (xamIR) of Xanthomonas campestris pv. amaranthicola.